Here is a 197-residue protein sequence, read N- to C-terminus: ADP-ribosylation factor-like protein 6-interacting protein 1 (197 aa).

Helical transmembrane passes span 43-63 (VVFG…LSLI), 64-84 (TLLS…PMVS), 129-149 (TVFV…GAII), and 150-170 (NNLL…GLQN).

This sequence belongs to the ARL6ip family.

The protein resides in the membrane. This Drosophila melanogaster (Fruit fly) protein is ADP-ribosylation factor-like protein 6-interacting protein 1.